The primary structure comprises 263 residues: Ribosomal RNA small subunit methyltransferase A (263 aa).

6 residues coordinate S-adenosyl-L-methionine: asparagine 20, leucine 22, glycine 47, glutamate 68, aspartate 90, and asparagine 110.

It belongs to the class I-like SAM-binding methyltransferase superfamily. rRNA adenine N(6)-methyltransferase family. RsmA subfamily.

The protein resides in the cytoplasm. It carries out the reaction adenosine(1518)/adenosine(1519) in 16S rRNA + 4 S-adenosyl-L-methionine = N(6)-dimethyladenosine(1518)/N(6)-dimethyladenosine(1519) in 16S rRNA + 4 S-adenosyl-L-homocysteine + 4 H(+). In terms of biological role, specifically dimethylates two adjacent adenosines (A1518 and A1519) in the loop of a conserved hairpin near the 3'-end of 16S rRNA in the 30S particle. May play a critical role in biogenesis of 30S subunits. This chain is Ribosomal RNA small subunit methyltransferase A, found in Chlorobium limicola (strain DSM 245 / NBRC 103803 / 6330).